A 128-amino-acid polypeptide reads, in one-letter code: L-ectoine synthase (128 aa).

The protein belongs to the ectoine synthase family.

It carries out the reaction (2S)-4-acetamido-2-aminobutanoate = L-ectoine + H2O. It functions in the pathway amine and polyamine biosynthesis; ectoine biosynthesis; L-ectoine from L-aspartate 4-semialdehyde: step 3/3. Functionally, catalyzes the circularization of gamma-N-acetyl-alpha,gamma-diaminobutyric acid (ADABA) to ectoine (1,4,5,6-tetrahydro-2-methyl-4-pyrimidine carboxylic acid), which is an excellent osmoprotectant. This Vibrio parahaemolyticus serotype O3:K6 (strain RIMD 2210633) protein is L-ectoine synthase.